Here is a 565-residue protein sequence, read N- to C-terminus: Urocanate hydratase (565 aa).

Residues 61–62 (GG), Gln139, 185–187 (GMG), Glu205, Arg210, 251–252 (NA), 272–276 (QTSAH), 282–283 (YL), and Tyr331 contribute to the NAD(+) site. Cys419 is a catalytic residue. A disordered region spans residues 453–472 (LDSGSVASPNRETESMRDGS). The span at 463–472 (RETESMRDGS) shows a compositional bias: basic and acidic residues. Residue Gly501 participates in NAD(+) binding.

Belongs to the urocanase family. Requires NAD(+) as cofactor.

It localises to the cytoplasm. It carries out the reaction 4-imidazolone-5-propanoate = trans-urocanate + H2O. Its pathway is amino-acid degradation; L-histidine degradation into L-glutamate; N-formimidoyl-L-glutamate from L-histidine: step 2/3. Its function is as follows. Catalyzes the conversion of urocanate to 4-imidazolone-5-propionate. This is Urocanate hydratase from Pseudomonas syringae pv. syringae (strain B728a).